The sequence spans 435 residues: Nuclear receptor subfamily 6 group A member 1 (435 aa).

The segment at residues 11–86 (QRACLICGDR…MGMNRKAIRE (76 aa)) is a DNA-binding region (nuclear receptor). NR C4-type zinc fingers lie at residues 14–34 (CLIC…CEGC) and 50–69 (CSRD…CQYC). The interval 84-157 (IREDGMPGGR…VSTPSSSRSM (74 aa)) is disordered. The span at 121–141 (NTSWSNNGDSDHSSPGNGVSE) shows a compositional bias: polar residues. Residues 142–156 (SNQPSPVSTPSSSRS) are compositionally biased toward low complexity. Positions 204–435 (QSHTLINQLL…HSCKTSLTKE (232 aa)) constitute an NR LBD domain.

This sequence belongs to the nuclear hormone receptor family. NR6 subfamily. Homodimer.

Its subcellular location is the cytoplasm. The protein resides in the nucleus. In terms of biological role, probable orphan nuclear receptor. Binds to a response element containing repeats of the motif 5'-AGGTCA-3'. Required for anterior-posterior patterning during organogenesis. Acts with chordin to play a role in patterning the midbrain-hindbrain. Isoform Em is required for integrin-mediated cell matrix interaction during neurulation and for the morphogenetic movements leading to formation of the neural tube. Also mediates the effect of retinoic acid on primary neurogenesis. This is Nuclear receptor subfamily 6 group A member 1 from Xenopus tropicalis (Western clawed frog).